We begin with the raw amino-acid sequence, 416 residues long: Serine hydroxymethyltransferase (416 aa).

Residues L121 and 125 to 127 (GHL) each bind (6S)-5,6,7,8-tetrahydrofolate. An N6-(pyridoxal phosphate)lysine modification is found at K230.

The protein belongs to the SHMT family. Homodimer. It depends on pyridoxal 5'-phosphate as a cofactor.

The protein resides in the cytoplasm. It carries out the reaction (6R)-5,10-methylene-5,6,7,8-tetrahydrofolate + glycine + H2O = (6S)-5,6,7,8-tetrahydrofolate + L-serine. Its pathway is one-carbon metabolism; tetrahydrofolate interconversion. The protein operates within amino-acid biosynthesis; glycine biosynthesis; glycine from L-serine: step 1/1. Catalyzes the reversible interconversion of serine and glycine with tetrahydrofolate (THF) serving as the one-carbon carrier. This reaction serves as the major source of one-carbon groups required for the biosynthesis of purines, thymidylate, methionine, and other important biomolecules. Also exhibits THF-independent aldolase activity toward beta-hydroxyamino acids, producing glycine and aldehydes, via a retro-aldol mechanism. This Nitrosomonas europaea (strain ATCC 19718 / CIP 103999 / KCTC 2705 / NBRC 14298) protein is Serine hydroxymethyltransferase.